A 367-amino-acid chain; its full sequence is Protein RecA (367 aa).

The span at 1–14 (MSTEVNANQSPNAE) shows a compositional bias: polar residues. Residues 1-24 (MSTEVNANQSPNAESRQEAARSGE) are disordered. Basic and acidic residues predominate over residues 15–24 (SRQEAARSGE). 84-91 (GPESSGKT) is a binding site for ATP. Residues 348 to 367 (GSEVSSNSMRPLTTANRKAA) are disordered. A compositionally biased stretch (polar residues) spans 349–367 (SEVSSNSMRPLTTANRKAA).

Belongs to the RecA family.

Its subcellular location is the cytoplasm. In terms of biological role, can catalyze the hydrolysis of ATP in the presence of single-stranded DNA, the ATP-dependent uptake of single-stranded DNA by duplex DNA, and the ATP-dependent hybridization of homologous single-stranded DNAs. It interacts with LexA causing its activation and leading to its autocatalytic cleavage. In Prochlorococcus marinus (strain MIT 9211), this protein is Protein RecA.